The primary structure comprises 224 residues: Leucyl/phenylalanyl-tRNA--protein transferase (224 aa).

The protein belongs to the L/F-transferase family.

Its subcellular location is the cytoplasm. The catalysed reaction is N-terminal L-lysyl-[protein] + L-leucyl-tRNA(Leu) = N-terminal L-leucyl-L-lysyl-[protein] + tRNA(Leu) + H(+). It carries out the reaction N-terminal L-arginyl-[protein] + L-leucyl-tRNA(Leu) = N-terminal L-leucyl-L-arginyl-[protein] + tRNA(Leu) + H(+). It catalyses the reaction L-phenylalanyl-tRNA(Phe) + an N-terminal L-alpha-aminoacyl-[protein] = an N-terminal L-phenylalanyl-L-alpha-aminoacyl-[protein] + tRNA(Phe). Functionally, functions in the N-end rule pathway of protein degradation where it conjugates Leu, Phe and, less efficiently, Met from aminoacyl-tRNAs to the N-termini of proteins containing an N-terminal arginine or lysine. The chain is Leucyl/phenylalanyl-tRNA--protein transferase from Rhodopseudomonas palustris (strain HaA2).